An 83-amino-acid chain; its full sequence is Exodeoxyribonuclease 7 small subunit (83 aa).

The protein belongs to the XseB family. As to quaternary structure, heterooligomer composed of large and small subunits.

The protein resides in the cytoplasm. The enzyme catalyses Exonucleolytic cleavage in either 5'- to 3'- or 3'- to 5'-direction to yield nucleoside 5'-phosphates.. Functionally, bidirectionally degrades single-stranded DNA into large acid-insoluble oligonucleotides, which are then degraded further into small acid-soluble oligonucleotides. The sequence is that of Exodeoxyribonuclease 7 small subunit from Nitrobacter winogradskyi (strain ATCC 25391 / DSM 10237 / CIP 104748 / NCIMB 11846 / Nb-255).